Reading from the N-terminus, the 510-residue chain is Bifunctional purine biosynthesis protein PurH (510 aa).

An MGS-like domain is found at 1–145 (MSKRALISVS…KNFEDVLVVT (145 aa)).

This sequence belongs to the PurH family.

It catalyses the reaction (6R)-10-formyltetrahydrofolate + 5-amino-1-(5-phospho-beta-D-ribosyl)imidazole-4-carboxamide = 5-formamido-1-(5-phospho-D-ribosyl)imidazole-4-carboxamide + (6S)-5,6,7,8-tetrahydrofolate. The enzyme catalyses IMP + H2O = 5-formamido-1-(5-phospho-D-ribosyl)imidazole-4-carboxamide. It functions in the pathway purine metabolism; IMP biosynthesis via de novo pathway; 5-formamido-1-(5-phospho-D-ribosyl)imidazole-4-carboxamide from 5-amino-1-(5-phospho-D-ribosyl)imidazole-4-carboxamide (10-formyl THF route): step 1/1. The protein operates within purine metabolism; IMP biosynthesis via de novo pathway; IMP from 5-formamido-1-(5-phospho-D-ribosyl)imidazole-4-carboxamide: step 1/1. This chain is Bifunctional purine biosynthesis protein PurH, found in Oceanobacillus iheyensis (strain DSM 14371 / CIP 107618 / JCM 11309 / KCTC 3954 / HTE831).